The sequence spans 494 residues: Solute carrier family 2, facilitated glucose transporter member 3 (494 aa).

Residues 1–10 (MGTTKVTPYL) lie on the Cytoplasmic side of the membrane. A helical membrane pass occupies residues 11–32 (IFATSVAAIGSFQFGYNTGVIN). The Extracellular segment spans residues 33–64 (APEMIIRDFLNYTLDEKLDEPPSRLLLTNLWS). Asn43 carries N-linked (GlcNAc...) asparagine glycosylation. The helical transmembrane segment at 65-84 (LSVAIFSVGGMIGSFSVGLF) threads the bilayer. Residues 85–89 (NRFGR) are Cytoplasmic-facing. A helical membrane pass occupies residues 90 to 110 (RNSMLIVNLLAVIGGCLMGFC). Over 111 to 117 (KISESVE) the chain is Extracellular. The chain crosses the membrane as a helical span at residues 118-141 (MLILGRLVIGVFCGLCTGFVPMYI). The Cytoplasmic segment spans residues 142 to 152 (GEISPTALRGA). Residues 153–173 (FGTLNQLGIVIGILVAQIFGL) form a helical membrane-spanning segment. A D-glucose-binding site is contributed by Gln158. Topologically, residues 174–182 (EIILGSEVL) are extracellular. A helical membrane pass occupies residues 183 to 203 (WPVLLGFTIIPAILQSAALPF). Topologically, residues 204–268 (CPESPRFLLI…LFRAPSYRQP (65 aa)) are cytoplasmic. Thr231 bears the Phosphothreonine mark. A helical membrane pass occupies residues 269-289 (IIISIVLQLSQQLSGINAVFY). Residues 276-278 (QLS) form an important for selectivity against fructose region. Residues 279–280 (QQ) and Asn285 each bind D-glucose. The Extracellular segment spans residues 290-303 (YSTGIFKDAGVKEP). A helical membrane pass occupies residues 304-324 (IYATIGAGVVNTIFTIVSVFL). Asn314 is a binding site for D-glucose. The Cytoplasmic portion of the chain corresponds to 325 to 330 (VERAGR). The helical transmembrane segment at 331 to 351 (RTLHLIGLGGMALCSVLMTVS) threads the bilayer. Residues 352–362 (LLLKDKYDTMS) are Extracellular-facing. A helical membrane pass occupies residues 363–388 (LVCIAAILIYVAFFEIGPGPIPWFIV). Glu377 and Trp385 together coordinate D-glucose. The Cytoplasmic portion of the chain corresponds to 389–398 (AELFSQGPRP). A helical membrane pass occupies residues 399-419 (AAMAVAGCSNWTSNFLVGLLF). Residues 420-428 (PSAAYYLGA) lie on the Extracellular side of the membrane. Residues 429-449 (YVFVIFAVFLVAFFIFTFFKV) form a helical membrane-spanning segment. The Cytoplasmic segment spans residues 450-494 (PETRGRTFEDITRAFEGQAAEANKLGKGPTMEMNSIQPIETTTHV). Position 484 is a phosphoserine (Ser484). Position 491 is a phosphothreonine (Thr491).

The protein belongs to the major facilitator superfamily. Sugar transporter (TC 2.A.1.1) family. Glucose transporter subfamily. In terms of assembly, interacts with SMIM43; the interaction may promote SLC2A3-mediated glucose transport to meet the energy needs of mesendoderm differentiation. In terms of tissue distribution, detected in stomach, placenta, lung and brain.

Its subcellular location is the cell membrane. The protein resides in the perikaryon. It localises to the cell projection. The catalysed reaction is D-glucose(out) = D-glucose(in). It catalyses the reaction D-galactose(in) = D-galactose(out). Its activity is regulated as follows. Deoxyglucose transport is inhibited by D-glucose, D-galactose and maltose. Galactose transport is inhibited by D-glucose and maltose. In terms of biological role, facilitative glucose transporter. Can also mediate the uptake of various other monosaccharides across the cell membrane. Mediates the uptake of glucose, 2-deoxyglucose, galactose, mannose, xylose and fucose, and probably also dehydroascorbate. Does not mediate fructose transport. Required for mesendoderm differentiation. This Oryctolagus cuniculus (Rabbit) protein is Solute carrier family 2, facilitated glucose transporter member 3.